The primary structure comprises 219 residues: Vacuolar protein sorting-associated protein 20 homolog 1 (219 aa).

A coiled-coil region spans residues 20–60; that stretch reads SLKTQRRKLGQYQQKLEKVIEAEKQAARDLIREKRKDRALL. The disordered stretch occupies residues 171–219; the sequence is PEVPTKESEESEKLDLPDVPTKTPVASNAEITPAESATKTKVLEEPLPA. The segment covering 174–186 has biased composition (basic and acidic residues); the sequence is PTKESEESEKLDL. Residues 194 to 209 show a composition bias toward polar residues; sequence PVASNAEITPAESATK.

It belongs to the SNF7 family. Component of the endosomal sorting required for transport complex III (ESCRT-III), composed at least of VPS2, VPS20, VPS24 and VPS32. Interacts with SKD1.

Its subcellular location is the endosome. In terms of biological role, component of the ESCRT-III complex, which is required for multivesicular bodies (MVBs) formation and sorting of endosomal cargo proteins into MVBs. The ESCRT-III complex is probably involved in the concentration of MVB cargo. The sequence is that of Vacuolar protein sorting-associated protein 20 homolog 1 (VPS20.1) from Arabidopsis thaliana (Mouse-ear cress).